Consider the following 406-residue polypeptide: Ribulose bisphosphate carboxylase large chain (406 aa).

Positions 101 and 151 each coordinate substrate. Residue Lys-153 is the Proton acceptor of the active site. Lys-155 is a substrate binding site. Mg(2+) contacts are provided by Lys-179, Asp-181, and Glu-182. Position 179 is an N6-carboxylysine (Lys-179). His-272 (proton acceptor) is an active-site residue. 3 residues coordinate substrate: Arg-273, His-305, and Ser-357.

The protein belongs to the RuBisCO large chain family. Type I subfamily. As to quaternary structure, heterohexadecamer of 8 large chains and 8 small chains; disulfide-linked. The disulfide link is formed within the large subunit homodimers. Mg(2+) is required as a cofactor. In terms of processing, the disulfide bond which can form in the large chain dimeric partners within the hexadecamer appears to be associated with oxidative stress and protein turnover.

The protein resides in the plastid. Its subcellular location is the chloroplast. It catalyses the reaction 2 (2R)-3-phosphoglycerate + 2 H(+) = D-ribulose 1,5-bisphosphate + CO2 + H2O. The catalysed reaction is D-ribulose 1,5-bisphosphate + O2 = 2-phosphoglycolate + (2R)-3-phosphoglycerate + 2 H(+). Functionally, ruBisCO catalyzes two reactions: the carboxylation of D-ribulose 1,5-bisphosphate, the primary event in carbon dioxide fixation, as well as the oxidative fragmentation of the pentose substrate in the photorespiration process. Both reactions occur simultaneously and in competition at the same active site. The polypeptide is Ribulose bisphosphate carboxylase large chain (rbcL) (Trichomanes striatum (Fern)).